A 362-amino-acid polypeptide reads, in one-letter code: Probable cysteine protease RDL2 (362 aa).

Positions 1-28 are cleaved as a signal peptide; the sequence is MAATPIRVIVSALVILSVLLLSSSLGVA. Positions 29–129 are cleaved as a propeptide — activation peptide; it reads TETEIERNET…ERYLYKEGDV (101 aa). An N-linked (GlcNAc...) asparagine glycan is attached at Asn36. 2 disulfides stabilise this stretch: Cys151–Cys194 and Cys185–Cys228. Cys154 is a catalytic residue. Asn234 carries N-linked (GlcNAc...) asparagine glycosylation. A disulfide bridge connects residues Cys287 and Cys338. Catalysis depends on residues His293 and Asn313.

It belongs to the peptidase C1 family.

Its function is as follows. Probable thiol protease. In Arabidopsis thaliana (Mouse-ear cress), this protein is Probable cysteine protease RDL2.